The following is a 168-amino-acid chain: Endoribonuclease YbeY (168 aa).

Zn(2+)-binding residues include His-132, His-136, and His-142.

Belongs to the endoribonuclease YbeY family. The cofactor is Zn(2+).

It is found in the cytoplasm. Its function is as follows. Single strand-specific metallo-endoribonuclease involved in late-stage 70S ribosome quality control and in maturation of the 3' terminus of the 16S rRNA. In Clostridium perfringens (strain SM101 / Type A), this protein is Endoribonuclease YbeY.